The chain runs to 586 residues: MASVTSLSDSVQQHLASALTATRPEAAGADPLLRRSDRADYQANGILALAKKTKANPRELAAEVVARITTGDELIEDVEVSGPGFLNITVADRAITANLAARLADGERLGVPLKQDAGTTVVDYAQPNVAKEMHVGHLRSAVIGDALRSMLDFTGEKTIGRHHIGDWGTQFGMLIQYLFEHPGELAPAGDIDGEQAMSNLNRVYKASRAVFDTDEEFKERARRRVVALQSGDKETLDLWQQFVDESKVYFYSVFEKLDMEIRDEEIVGESAYNDGMPETARLLEEMGVAVRSEGALVVFFDEIRGKDDQPVPLIVQKADGGFGYAASDLTAIRNRVQDLHATTLLYVVDVRQSLHFRMVFETARRAGWLGDEVTAHNMGYGTVLGADGKPFKTRAGETVRLEDLLDEAVQRAAEVVREKARDLTEDEIQERAAQVGIGAVKYADLSTSPNRDYKFDLDQMVSLNGDTSVYLQYAYARIQSILRKAGEVRPAAHPELALHEAERALGLHLDAFGPTVFEAAAEYAPHKLAAYLYQLASLYTTFYDKCPVLKAETPEQVENRLFLCDLTARTLHRGMALLGIRTPERL.

The 'HIGH' region motif lies at Pro127–His137.

It belongs to the class-I aminoacyl-tRNA synthetase family. Monomer.

The protein resides in the cytoplasm. It catalyses the reaction tRNA(Arg) + L-arginine + ATP = L-arginyl-tRNA(Arg) + AMP + diphosphate. The protein is Arginine--tRNA ligase (argS) of Streptomyces coelicolor (strain ATCC BAA-471 / A3(2) / M145).